The primary structure comprises 598 residues: Aluminum-activated malate transporter 9 (598 aa).

The next 6 membrane-spanning stretches (helical) occupy residues 88 to 108 (IVFS…IFYQ), 117 to 137 (YSVW…GATL), 144 to 164 (ALGT…STLF), 170 to 190 (IFCT…KLYP), 194 to 214 (AYEY…ISGF), and 227 to 247 (FLLI…IYPI).

This sequence belongs to the aromatic acid exporter (TC 2.A.85) family. As to expression, expressed in hypocotyls, leaves, roots, flowers, sepals and stamina. In leaves, expressed almost exclusively in mesophyll cells.

The protein resides in the vacuole membrane. With respect to regulation, slow activation by external aluminum. Its function is as follows. Vacuolar malate channel. Has a higher selectivity for malate than for fumarate. Also exhibits a weak chloride conductance. This Arabidopsis thaliana (Mouse-ear cress) protein is Aluminum-activated malate transporter 9 (ALMT9).